Reading from the N-terminus, the 232-residue chain is BTB/POZ domain-containing protein KCTD11 (232 aa).

A BTB domain is found at 1 to 49 (MLGAMFRADTLMPANLNPQGDGHYFIDRDGKAFRHILNFLRLGRLDLPR).

In terms of assembly, homopentamer. Interacts with KCTD6 and KCTD21; KCTD11 and KCTD6 or KCTD21 may associate in pentameric assemblies. Component of the BCR(KCTD11) E3 ubiquitin ligase complex, at least composed of CUL3 and KCTD11 and RBX1. Interacts (via BTB domain) with CUL3; initially a 4:4 stoichiometry has been reported, however, electron microscopy revealed pentameric states of the BTB domain. Weakly expressed in lung. In the cerebellum, higher expression in non proliferating external granule cells layer than in highly proliferating ones.

It participates in protein modification; protein ubiquitination. Its function is as follows. Plays a role as a marker and a regulator of neuronal differentiation; Up-regulated by a variety of neurogenic signals, such as retinoic acid, epidermal growth factor/EGF and NGFB/nerve growth factor. Induces apoptosis, growth arrest and the expression of cyclin-dependent kinase inhibitor CDKN1B. Plays a role as a tumor repressor and inhibits cell growth and tumorigenicity of medulloblastoma (MDB). Acts as a probable substrate-specific adapter for a BCR (BTB-CUL3-RBX1) E3 ubiquitin-protein ligase complex towards HDAC1. Functions as antagonist of the Hedgehog pathway on cell proliferation and differentiation by affecting the nuclear transfer of transcription factor GLI1, thus maintaining cerebellar granule cells in undifferentiated state, this effect probably occurs via HDAC1 down-regulation, keeping GLI1 acetylated and inactive. When knock-down, Hedgehog antagonism is impaired and proliferation of granule cells is sustained. Activates the caspase cascade. This Mus musculus (Mouse) protein is BTB/POZ domain-containing protein KCTD11 (Kctd11).